A 437-amino-acid chain; its full sequence is Histidine--tRNA ligase (437 aa).

This sequence belongs to the class-II aminoacyl-tRNA synthetase family. As to quaternary structure, homodimer.

It is found in the cytoplasm. The catalysed reaction is tRNA(His) + L-histidine + ATP = L-histidyl-tRNA(His) + AMP + diphosphate + H(+). The polypeptide is Histidine--tRNA ligase (Leptospira biflexa serovar Patoc (strain Patoc 1 / Ames)).